The primary structure comprises 397 residues: Elongation factor Tu (397 aa).

A tr-type G domain is found at 10–207 (KPHCNIGTIG…EVDKYIPQPE (198 aa)). The tract at residues 19–26 (GHVDHGKT) is G1. 19-26 (GHVDHGKT) lines the GTP pocket. T26 provides a ligand contact to Mg(2+). The tract at residues 61–65 (GITIS) is G2. The tract at residues 82–85 (DCPG) is G3. GTP contacts are provided by residues 82–86 (DCPGH) and 137–140 (NKCD). A G4 region spans residues 137 to 140 (NKCD). Positions 175–177 (SAL) are G5.

The protein belongs to the TRAFAC class translation factor GTPase superfamily. Classic translation factor GTPase family. EF-Tu/EF-1A subfamily. As to quaternary structure, monomer.

It localises to the cytoplasm. The enzyme catalyses GTP + H2O = GDP + phosphate + H(+). Functionally, GTP hydrolase that promotes the GTP-dependent binding of aminoacyl-tRNA to the A-site of ribosomes during protein biosynthesis. This Azorhizobium caulinodans (strain ATCC 43989 / DSM 5975 / JCM 20966 / LMG 6465 / NBRC 14845 / NCIMB 13405 / ORS 571) protein is Elongation factor Tu.